The following is an 89-amino-acid chain: MALTKDSKKAIVEKFARFAGDTGSPEVQVAILTHEINELNEHLQTHIHDFHSKRGLFMKIGRRRNLLKYLREQDAQRYAALINELGLRR.

It belongs to the universal ribosomal protein uS15 family. As to quaternary structure, part of the 30S ribosomal subunit. Forms a bridge to the 50S subunit in the 70S ribosome, contacting the 23S rRNA.

One of the primary rRNA binding proteins, it binds directly to 16S rRNA where it helps nucleate assembly of the platform of the 30S subunit by binding and bridging several RNA helices of the 16S rRNA. In terms of biological role, forms an intersubunit bridge (bridge B4) with the 23S rRNA of the 50S subunit in the ribosome. The protein is Small ribosomal subunit protein uS15 of Acholeplasma laidlawii (strain PG-8A).